Consider the following 138-residue polypeptide: Rubber elongation factor protein (138 aa).

Alanine 2 is subject to N-acetylalanine.

Belongs to the REF/SRPP family. In solution, able to form amyloid fibers and aggregates rich in beta-sheets. Interaction with membrane stabilizes the protein, inhibiting the amyloid state and aggregation. Not glycosylated. In terms of tissue distribution, localized in all laticifer layers.

The protein resides in the cytoplasm. May be part of the rubber biosynthesis machinery. Plays a role in rubber elongation. The polypeptide is Rubber elongation factor protein (Hevea brasiliensis (Para rubber tree)).